Here is a 436-residue protein sequence, read N- to C-terminus: 3-ketoacyl-CoA thiolase (436 aa).

C99 serves as the catalytic Acyl-thioester intermediate. Residues H392 and C422 each act as proton acceptor in the active site.

This sequence belongs to the thiolase-like superfamily. Thiolase family. In terms of assembly, heterotetramer of two alpha chains (FadJ) and two beta chains (FadI).

The protein resides in the cytoplasm. The enzyme catalyses an acyl-CoA + acetyl-CoA = a 3-oxoacyl-CoA + CoA. Its pathway is lipid metabolism; fatty acid beta-oxidation. Catalyzes the final step of fatty acid oxidation in which acetyl-CoA is released and the CoA ester of a fatty acid two carbons shorter is formed. The chain is 3-ketoacyl-CoA thiolase from Salmonella paratyphi B (strain ATCC BAA-1250 / SPB7).